Here is a 387-residue protein sequence, read N- to C-terminus: Cytochrome b (387 aa).

Helical transmembrane passes span 32-52 (FGSLLACVLVVQIVTGILLAC), 76-98 (FLLRALHANGASFFFIFLYLHIG), 113-133 (TWNIGVIIFLLTIITAFLGYC), and 179-199 (FFSLHYLMPFVIAALSIMHLI). 2 residues coordinate heme b: His-82 and His-96. Heme b contacts are provided by His-183 and His-197. An a ubiquinone-binding site is contributed by His-202. Transmembrane regions (helical) follow at residues 225–245 (FLIKDLITIFIFLLAINYMVF), 289–309 (QLGVVAMLLSILVLLLLPLLD), 321–341 (MGKFFFWCFVADFCILAWIGG), and 348–368 (FITIGAYATAFYFIYFFILIP).

Belongs to the cytochrome b family. As to quaternary structure, fungal cytochrome b-c1 complex contains 10 subunits; 3 respiratory subunits, 2 core proteins and 5 low-molecular weight proteins. Cytochrome b-c1 complex is a homodimer. It depends on heme b as a cofactor.

Its subcellular location is the mitochondrion inner membrane. In terms of biological role, component of the ubiquinol-cytochrome c reductase complex (complex III or cytochrome b-c1 complex) that is part of the mitochondrial respiratory chain. The b-c1 complex mediates electron transfer from ubiquinol to cytochrome c. Contributes to the generation of a proton gradient across the mitochondrial membrane that is then used for ATP synthesis. This Schizosaccharomyces octosporus (Fission yeast) protein is Cytochrome b (cob).